Consider the following 161-residue polypeptide: Allophycocyanin beta chain (161 aa).

Asn-71 is modified (N4-methylasparagine). Cys-81 is a binding site for (2R,3E)-phycocyanobilin.

The protein belongs to the phycobiliprotein family. Heterodimer of an alpha and a beta chain. Contains one covalently linked phycocyanobilin chromophore.

The protein resides in the plastid. It is found in the chloroplast thylakoid membrane. In terms of biological role, light-harvesting photosynthetic bile pigment-protein from the phycobiliprotein complex. Allophycocyanin has a maximum absorption at approximately 650 nanometers. This chain is Allophycocyanin beta chain (apcB), found in Porphyra purpurea (Red seaweed).